The following is a 213-amino-acid chain: uncharacterized protein (213 aa).

An N-terminal signal peptide occupies residues 1–21 (MKKILFLTVICFCLSSIKAYA).

This is an uncharacterized protein from Rickettsia prowazekii (strain Madrid E).